The sequence spans 443 residues: MQNRPRVFDSAMNLSPNMHFLSLMPGLLLLSLQVHTSPTPLKKTIRSVRIERIRQPNYVPDGPGALKKAYAKFGIIPSGISFDSFEDFTPFSSDNVRNTVSKAMQANETGIVTNTPTNNDVEYLSPVTIGGQKFVMNLDTGSSDTWVFNTQLSEDAKRGHSIFDPAKSKAFSDLEDATFNITYGDASFAFGRVGIDTVDIGGATVQKQAVGLPTDVSGSFILDQASDGLIGLGFDELNTVEPQQQKSFFTNLAANLDEPVLAAQLKKGAPGSYEFGSIDETKFKGDLVTIPVNNSRGFWEVKSTMFKVGKDEQLHRITKGVGSAIADTGTTLMLVNEEIVNSYYDQVDNARSVYAAGGFIFPCNATLPDLYVSLGDTHLARIPGDLMNFSKVGLSTETGEELCFGGVQSNSGSGLQVFGDVLFKAIFVVFDLRGPSLHVAGHA.

The signal sequence occupies residues 1–36; that stretch reads MQNRPRVFDSAMNLSPNMHFLSLMPGLLLLSLQVHT. Positions 37–107 are cleaved as a propeptide — activation peptide; it reads SPTPLKKTIR…NTVSKAMQAN (71 aa). One can recognise a Peptidase A1 domain in the interval 123–440; the sequence is YLSPVTIGGQ…DLRGPSLHVA (318 aa). Aspartate 139 is an active-site residue. N-linked (GlcNAc...) asparagine glycans are attached at residues asparagine 180 and asparagine 293. Residue aspartate 327 is part of the active site. Cysteine 363 and cysteine 403 are joined by a disulfide. N-linked (GlcNAc...) asparagine glycosylation is found at asparagine 364 and asparagine 388.

It belongs to the peptidase A1 family. In terms of assembly, monomer.

Its subcellular location is the secreted. Functionally, secreted aspartic endopeptidase that allows assimilation of proteinaceous substrates. The scissile peptide bond is attacked by a nucleophilic water molecule activated by two aspartic residues in the active site. Shows a broad primary substrate specificity. Favors hydrophobic residues at the P1 and P1' positions. This Coccidioides posadasii (strain C735) (Valley fever fungus) protein is Aspartic protease PEP3.